Here is a 118-residue protein sequence, read N- to C-terminus: Ribonuclease P protein component (118 aa).

The protein belongs to the RnpA family. In terms of assembly, consists of a catalytic RNA component (M1 or rnpB) and a protein subunit.

It carries out the reaction Endonucleolytic cleavage of RNA, removing 5'-extranucleotides from tRNA precursor.. RNaseP catalyzes the removal of the 5'-leader sequence from pre-tRNA to produce the mature 5'-terminus. It can also cleave other RNA substrates such as 4.5S RNA. The protein component plays an auxiliary but essential role in vivo by binding to the 5'-leader sequence and broadening the substrate specificity of the ribozyme. This is Ribonuclease P protein component from Rickettsia felis (strain ATCC VR-1525 / URRWXCal2) (Rickettsia azadi).